Consider the following 408-residue polypeptide: 3-hydroxy-3-methylglutaryl-coenzyme A reductase (408 aa).

Catalysis depends on charge relay system residues Glu101 and Asp307. His403 acts as the Proton donor in catalysis.

This sequence belongs to the HMG-CoA reductase family.

The catalysed reaction is (R)-mevalonate + 2 NADP(+) + CoA = (3S)-3-hydroxy-3-methylglutaryl-CoA + 2 NADPH + 2 H(+). Its pathway is metabolic intermediate biosynthesis; (R)-mevalonate biosynthesis; (R)-mevalonate from acetyl-CoA: step 3/3. Its function is as follows. Converts HMG-CoA to mevalonate. The polypeptide is 3-hydroxy-3-methylglutaryl-coenzyme A reductase (hmgA) (Pyrococcus abyssi (strain GE5 / Orsay)).